A 569-amino-acid polypeptide reads, in one-letter code: MLO-like protein 10 (569 aa).

Residues 1-41 lie on the Extracellular side of the membrane; it reads MATRCFWCWTTLLFCSQLLTGFARASSAGGAKEKGLSQTPT. The chain crosses the membrane as a helical span at residues 42–62; the sequence is WAVALVCTFFILVSVLLEKAL. Residues 63-85 are Cytoplasmic-facing; the sequence is HRVATWLWEKHKNSLLEALEKIK. Residues 86-106 traverse the membrane as a helical segment; the sequence is AELMILGFISLLLTFGEQYIL. The Extracellular segment spans residues 107–163; it reads KICIPEKAAASMLPCPAPSTHDQDKTHRRRLAAATTSSRCDEGHEPLIPATGLHQLH. Residues 164 to 184 form a helical membrane-spanning segment; the sequence is ILLFFMAAFHILYSFITMMLG. Topologically, residues 185–286 are cytoplasmic; that stretch reads RLKIRGWKKW…IKRSLEDDFK (102 aa). The helical transmembrane segment at 287 to 307 threads the bilayer; sequence VVVGISPLLWASFVIFLLLNV. Residue asparagine 308 is a topological domain, extracellular. The helical transmembrane segment at 309-329 threads the bilayer; it reads GWEALFWASILPVLIILAVST. Over 330–372 the chain is Cytoplasmic; sequence KLQAILTRMALGITERHAVVQGIPLVHGSDKYFWFNRPQLLLH. Residues 373 to 393 traverse the membrane as a helical segment; it reads LLHFALFQNAFQLTYFFWVWY. The Extracellular portion of the chain corresponds to 394 to 413; the sequence is SFGLKSCFHTDFKLVIVKLS. A helical membrane pass occupies residues 414 to 434; sequence LGVGALILCSYITLPLYALVT. At 435–569 the chain is on the cytoplasmic side; the sequence is QMGSNMKKAV…VKNVPANDID (135 aa). The tract at residues 447–468 is calmodulin-binding; that stretch reads EQMAKALKKWHMTVKKKKGKAR.

The protein belongs to the MLO family.

Its subcellular location is the membrane. In terms of biological role, may be involved in modulation of pathogen defense and leaf cell death. Activity seems to be regulated by Ca(2+)-dependent calmodulin binding and seems not to require heterotrimeric G proteins. The sequence is that of MLO-like protein 10 (MLO10) from Arabidopsis thaliana (Mouse-ear cress).